The following is an 85-amino-acid chain: MAHPRTPQQRLAVALIRVYQWVISPLLGPRCRFTPTCSQYMINAICLHGLIKGIWLGGKRLLKCHPLHSGGHDPVPQPQQSKRRK.

It belongs to the UPF0161 family.

The protein localises to the cell inner membrane. Functionally, could be involved in insertion of integral membrane proteins into the membrane. This Tolumonas auensis (strain DSM 9187 / NBRC 110442 / TA 4) protein is Putative membrane protein insertion efficiency factor.